Consider the following 44-residue polypeptide: Cytochrome b559 subunit beta (44 aa).

Residues 19–35 traverse the membrane as a helical segment; sequence WLSVHALAVPTVFFIGA. Heme is bound at residue His-23.

It belongs to the PsbE/PsbF family. As to quaternary structure, heterodimer of an alpha subunit and a beta subunit. PSII is composed of 1 copy each of membrane proteins PsbA, PsbB, PsbC, PsbD, PsbE, PsbF, PsbH, PsbI, PsbJ, PsbK, PsbL, PsbM, PsbT, PsbX, PsbY, PsbZ, Psb30/Ycf12, peripheral proteins PsbO, CyanoQ (PsbQ), PsbU, PsbV and a large number of cofactors. It forms dimeric complexes. The cofactor is heme b.

Its subcellular location is the cellular thylakoid membrane. Functionally, this b-type cytochrome is tightly associated with the reaction center of photosystem II (PSII). PSII is a light-driven water:plastoquinone oxidoreductase that uses light energy to abstract electrons from H(2)O, generating O(2) and a proton gradient subsequently used for ATP formation. It consists of a core antenna complex that captures photons, and an electron transfer chain that converts photonic excitation into a charge separation. The protein is Cytochrome b559 subunit beta of Rippkaea orientalis (strain PCC 8801 / RF-1) (Cyanothece sp. (strain PCC 8801)).